The following is a 302-amino-acid chain: tRNA-cytidine(32) 2-sulfurtransferase (302 aa).

The PP-loop motif motif lies at 57-62 (SGGKDS). Positions 132, 135, and 223 each coordinate [4Fe-4S] cluster.

It belongs to the TtcA family. As to quaternary structure, homodimer. It depends on Mg(2+) as a cofactor. [4Fe-4S] cluster serves as cofactor.

The protein localises to the cytoplasm. It catalyses the reaction cytidine(32) in tRNA + S-sulfanyl-L-cysteinyl-[cysteine desulfurase] + AH2 + ATP = 2-thiocytidine(32) in tRNA + L-cysteinyl-[cysteine desulfurase] + A + AMP + diphosphate + H(+). It participates in tRNA modification. In terms of biological role, catalyzes the ATP-dependent 2-thiolation of cytidine in position 32 of tRNA, to form 2-thiocytidine (s(2)C32). The sulfur atoms are provided by the cysteine/cysteine desulfurase (IscS) system. This is tRNA-cytidine(32) 2-sulfurtransferase from Marinobacter nauticus (strain ATCC 700491 / DSM 11845 / VT8) (Marinobacter aquaeolei).